The primary structure comprises 258 residues: Probable glycerol uptake facilitator protein (258 aa).

A run of 2 helical transmembrane segments spans residues 11-31 and 50-70; these read WWFL…NGAV and TVAL…NAIF. Positions 77–79 match the NPA 1 motif; the sequence is NPA. 3 helical membrane passes run 95 to 115, 152 to 172, and 180 to 200; these read ALIW…AMIA, FLTE…ASHF, and VPPG…FGGA. An NPA 2 motif is present at residues 206–208; sequence NPA. A helical transmembrane segment spans residues 233–253; sequence WIPVIAPLSAGLVLSIIIGFS.

It belongs to the MIP/aquaporin (TC 1.A.8) family.

The protein resides in the cell membrane. The catalysed reaction is glycerol(in) = glycerol(out). Its function is as follows. Mediates glycerol diffusion across the cytoplasmic membrane via a pore-type mechanism. The sequence is that of Probable glycerol uptake facilitator protein (glpF) from Mycoplasma genitalium (strain ATCC 33530 / DSM 19775 / NCTC 10195 / G37) (Mycoplasmoides genitalium).